A 321-amino-acid chain; its full sequence is Glucokinase (321 aa).

Glycine 8–threonine 13 lines the ATP pocket.

The protein belongs to the bacterial glucokinase family.

The protein resides in the cytoplasm. The enzyme catalyses D-glucose + ATP = D-glucose 6-phosphate + ADP + H(+). In Shigella dysenteriae serotype 1 (strain Sd197), this protein is Glucokinase.